We begin with the raw amino-acid sequence, 468 residues long: ATP synthase subunit beta (468 aa).

153–160 is a binding site for ATP; that stretch reads GGAGVGKT.

This sequence belongs to the ATPase alpha/beta chains family. F-type ATPases have 2 components, CF(1) - the catalytic core - and CF(0) - the membrane proton channel. CF(1) has five subunits: alpha(3), beta(3), gamma(1), delta(1), epsilon(1). CF(0) has three main subunits: a(1), b(2) and c(9-12). The alpha and beta chains form an alternating ring which encloses part of the gamma chain. CF(1) is attached to CF(0) by a central stalk formed by the gamma and epsilon chains, while a peripheral stalk is formed by the delta and b chains.

Its subcellular location is the cell membrane. The catalysed reaction is ATP + H2O + 4 H(+)(in) = ADP + phosphate + 5 H(+)(out). Its function is as follows. Produces ATP from ADP in the presence of a proton gradient across the membrane. The catalytic sites are hosted primarily by the beta subunits. The sequence is that of ATP synthase subunit beta from Ligilactobacillus salivarius (strain UCC118) (Lactobacillus salivarius).